The primary structure comprises 182 residues: ATP synthase subunit delta (182 aa).

This sequence belongs to the ATPase delta chain family. F-type ATPases have 2 components, F(1) - the catalytic core - and F(0) - the membrane proton channel. F(1) has five subunits: alpha(3), beta(3), gamma(1), delta(1), epsilon(1). CF(0) has four main subunits: a(1), b(1), b'(1) and c(10-14). The alpha and beta chains form an alternating ring which encloses part of the gamma chain. F(1) is attached to F(0) by a central stalk formed by the gamma and epsilon chains, while a peripheral stalk is formed by the delta, b and b' chains.

The protein resides in the cellular thylakoid membrane. In terms of biological role, f(1)F(0) ATP synthase produces ATP from ADP in the presence of a proton or sodium gradient. F-type ATPases consist of two structural domains, F(1) containing the extramembraneous catalytic core and F(0) containing the membrane proton channel, linked together by a central stalk and a peripheral stalk. During catalysis, ATP synthesis in the catalytic domain of F(1) is coupled via a rotary mechanism of the central stalk subunits to proton translocation. Functionally, this protein is part of the stalk that links CF(0) to CF(1). It either transmits conformational changes from CF(0) to CF(1) or is implicated in proton conduction. The sequence is that of ATP synthase subunit delta from Prochlorococcus marinus (strain MIT 9211).